The chain runs to 473 residues: Siroheme synthase (473 aa).

A precorrin-2 dehydrogenase /sirohydrochlorin ferrochelatase region spans residues 1-203; it reads MTLFPIFADL…QQPGLAEQEL (203 aa). Residues 22 to 23 and 43 to 44 each bind NAD(+); these read AV and PR. S128 carries the post-translational modification Phosphoserine. Residues 216 to 473 form a uroporphyrinogen-III C-methyltransferase region; the sequence is GSVVLVGAGP…GLPGPQALAA (258 aa). P225 is an S-adenosyl-L-methionine binding site. D248 acts as the Proton acceptor in catalysis. K270 functions as the Proton donor in the catalytic mechanism. S-adenosyl-L-methionine is bound by residues 302–304, I307, 332–333, M384, and G413; these read GGD and TA.

It in the N-terminal section; belongs to the precorrin-2 dehydrogenase / sirohydrochlorin ferrochelatase family. In the C-terminal section; belongs to the precorrin methyltransferase family.

It catalyses the reaction uroporphyrinogen III + 2 S-adenosyl-L-methionine = precorrin-2 + 2 S-adenosyl-L-homocysteine + H(+). The enzyme catalyses precorrin-2 + NAD(+) = sirohydrochlorin + NADH + 2 H(+). The catalysed reaction is siroheme + 2 H(+) = sirohydrochlorin + Fe(2+). Its pathway is cofactor biosynthesis; adenosylcobalamin biosynthesis; precorrin-2 from uroporphyrinogen III: step 1/1. The protein operates within cofactor biosynthesis; adenosylcobalamin biosynthesis; sirohydrochlorin from precorrin-2: step 1/1. It functions in the pathway porphyrin-containing compound metabolism; siroheme biosynthesis; precorrin-2 from uroporphyrinogen III: step 1/1. It participates in porphyrin-containing compound metabolism; siroheme biosynthesis; siroheme from sirohydrochlorin: step 1/1. Its pathway is porphyrin-containing compound metabolism; siroheme biosynthesis; sirohydrochlorin from precorrin-2: step 1/1. In terms of biological role, multifunctional enzyme that catalyzes the SAM-dependent methylations of uroporphyrinogen III at position C-2 and C-7 to form precorrin-2 via precorrin-1. Then it catalyzes the NAD-dependent ring dehydrogenation of precorrin-2 to yield sirohydrochlorin. Finally, it catalyzes the ferrochelation of sirohydrochlorin to yield siroheme. This Bordetella parapertussis (strain 12822 / ATCC BAA-587 / NCTC 13253) protein is Siroheme synthase.